Consider the following 617-residue polypeptide: Vacuolar protein sorting-associated protein 33B (617 aa).

The protein belongs to the STXBP/unc-18/SEC1 family. As to quaternary structure, interacts with vipas39. Widely expressed from 4 hours post-fertilization (hpf) to 24 hpf. At 48 hpf, localized to brain, retina, ear, liver and proximal intestine. This expression pattern is more pronounced at 72 hpf and persists through 5 days post-fertilization (dpf). At 3 dpf and 4 dpf, expression in the liver is predominantly in developing biliary epithelial cells. No expression detected in kidney or spinal cord.

It is found in the late endosome membrane. The protein resides in the lysosome membrane. Its function is as follows. May play a role in vesicle-mediated protein trafficking to lysosomal compartments and in membrane docking/fusion reactions of late endosomes/lysosomes. Required for proper trafficking and targeting of the collagen-modifying enzyme lysyl hydroxylase 3 (LH3) to intracellular collagen. Mediates phagolysosomal fusion in macrophages. Proposed to be involved in endosomal maturation implicating vipas39. In epithelial cells, the vps33b:vipas39 complex may play a role in the apical recycling pathway and in the maintenance of the apical-basolateral polarity. Plays a role in bile duct development. In Danio rerio (Zebrafish), this protein is Vacuolar protein sorting-associated protein 33B.